The following is a 106-amino-acid chain: ATP-dependent Clp protease adapter protein ClpS (106 aa).

The protein belongs to the ClpS family. As to quaternary structure, binds to the N-terminal domain of the chaperone ClpA.

In terms of biological role, involved in the modulation of the specificity of the ClpAP-mediated ATP-dependent protein degradation. The chain is ATP-dependent Clp protease adapter protein ClpS from Aliivibrio salmonicida (strain LFI1238) (Vibrio salmonicida (strain LFI1238)).